We begin with the raw amino-acid sequence, 111 residues long: Iron-sulfur cluster assembly protein CyaY (111 aa).

It belongs to the frataxin family.

In terms of biological role, involved in iron-sulfur (Fe-S) cluster assembly. May act as a regulator of Fe-S biogenesis. This chain is Iron-sulfur cluster assembly protein CyaY, found in Cupriavidus pinatubonensis (strain JMP 134 / LMG 1197) (Cupriavidus necator (strain JMP 134)).